A 100-amino-acid chain; its full sequence is Urease subunit gamma (100 aa).

This sequence belongs to the urease gamma subunit family. In terms of assembly, heterotrimer of UreA (gamma), UreB (beta) and UreC (alpha) subunits. Three heterotrimers associate to form the active enzyme.

It localises to the cytoplasm. It catalyses the reaction urea + 2 H2O + H(+) = hydrogencarbonate + 2 NH4(+). It participates in nitrogen metabolism; urea degradation; CO(2) and NH(3) from urea (urease route): step 1/1. In Burkholderia thailandensis (strain ATCC 700388 / DSM 13276 / CCUG 48851 / CIP 106301 / E264), this protein is Urease subunit gamma.